The following is a 435-amino-acid chain: ATP-dependent protease ATPase subunit HslU (435 aa).

ATP contacts are provided by residues valine 18, 60-65 (GVGKTE), aspartate 248, glutamate 313, and arginine 385.

This sequence belongs to the ClpX chaperone family. HslU subfamily. In terms of assembly, a double ring-shaped homohexamer of HslV is capped on each side by a ring-shaped HslU homohexamer. The assembly of the HslU/HslV complex is dependent on binding of ATP.

The protein resides in the cytoplasm. Functionally, ATPase subunit of a proteasome-like degradation complex; this subunit has chaperone activity. The binding of ATP and its subsequent hydrolysis by HslU are essential for unfolding of protein substrates subsequently hydrolyzed by HslV. HslU recognizes the N-terminal part of its protein substrates and unfolds these before they are guided to HslV for hydrolysis. In Parvibaculum lavamentivorans (strain DS-1 / DSM 13023 / NCIMB 13966), this protein is ATP-dependent protease ATPase subunit HslU.